We begin with the raw amino-acid sequence, 149 residues long: Calmodulin (149 aa).

The residue at position 2 (alanine 2) is an N-acetylalanine. EF-hand domains follow at residues 8-43 (EQISEFKEAFSLFDKDGDGTITTKELGTVMRSLGQN), 44-79 (PTEAELQDMINEVDADGNGTIDFPEFLTMMARKMRD), 81-116 (DSEEEIKEAFKVFDKDGNGYISAAELRHVMTNLGEK), and 117-149 (LTDNEVDEMIREADVDGDGQINYEEFVKMMLSK). The Ca(2+) site is built by aspartate 21, aspartate 23, aspartate 25, threonine 27, glutamate 32, aspartate 57, aspartate 59, asparagine 61, threonine 63, glutamate 68, aspartate 94, aspartate 96, asparagine 98, tyrosine 100, glutamate 105, aspartate 130, aspartate 132, aspartate 134, glutamine 136, and glutamate 141.

The protein belongs to the calmodulin family.

Calmodulin mediates the control of a large number of enzymes, ion channels and other proteins by Ca(2+). Among the enzymes to be stimulated by the calmodulin-Ca(2+) complex are a number of protein kinases and phosphatases. The polypeptide is Calmodulin (CMD1) (Pleurotus ostreatus (Oyster mushroom)).